The primary structure comprises 560 residues: DNA ligase B (560 aa).

Residue Lys124 is the N6-AMP-lysine intermediate of the active site.

This sequence belongs to the NAD-dependent DNA ligase family. LigB subfamily.

The catalysed reaction is NAD(+) + (deoxyribonucleotide)n-3'-hydroxyl + 5'-phospho-(deoxyribonucleotide)m = (deoxyribonucleotide)n+m + AMP + beta-nicotinamide D-nucleotide.. Its function is as follows. Catalyzes the formation of phosphodiester linkages between 5'-phosphoryl and 3'-hydroxyl groups in double-stranded DNA using NAD as a coenzyme and as the energy source for the reaction. The polypeptide is DNA ligase B (Shigella flexneri).